Consider the following 201-residue polypeptide: Peptidyl-prolyl cis-trans isomerase FKBP11 (201 aa).

An N-terminal signal peptide occupies residues 1–27 (MTLSPLLLPLQLLLLLLFSGAVCRAEA). The region spanning 57–144 (GDTLHIHYTG…QYDVELIALI (88 aa)) is the PPIase FKBP-type domain. Residues 156–176 (ILPLVGIAMVPALLGLIGYHL) form a helical membrane-spanning segment.

It belongs to the FKBP-type PPIase family. In terms of assembly, interacts with IFITM5.

The protein resides in the membrane. It carries out the reaction [protein]-peptidylproline (omega=180) = [protein]-peptidylproline (omega=0). PPIases accelerate the folding of proteins during protein synthesis. This Mus musculus (Mouse) protein is Peptidyl-prolyl cis-trans isomerase FKBP11 (Fkbp11).